The primary structure comprises 122 residues: Large ribosomal subunit protein bL19 (122 aa).

The protein belongs to the bacterial ribosomal protein bL19 family.

This protein is located at the 30S-50S ribosomal subunit interface and may play a role in the structure and function of the aminoacyl-tRNA binding site. The polypeptide is Large ribosomal subunit protein bL19 (Chlamydia abortus (strain DSM 27085 / S26/3) (Chlamydophila abortus)).